A 359-amino-acid chain; its full sequence is AA9 family lytic polysaccharide monooxygenase B (359 aa).

The first 18 residues, 1–18 (MQLFTSFSLLAVASFASA), serve as a signal peptide directing secretion. His19 and His102 together coordinate Cu(2+). Intrachain disulfides connect Cys72–Cys190 and Cys113–Cys117. Asn150 carries an N-linked (GlcNAc...) asparagine glycan. His176 and Gln185 together coordinate O2. Tyr187 contacts Cu(2+). A disordered region spans residues 241–310 (GGSPGNSAEP…STNINPTSLK (70 aa)). A compositionally biased stretch (polar residues) spans 245–254 (GNSAEPQPQH). A compositionally biased stretch (low complexity) spans 255-304 (TSTAVSTAKTASTSSLTTSVTITSQAPSNTANPPQSITTTTTPKPQSTNI). N-linked (GlcNAc...) asparagine glycosylation occurs at Asn345.

The protein belongs to the polysaccharide monooxygenase AA9 family. The cofactor is Cu(2+).

Its subcellular location is the secreted. The enzyme catalyses [(1-&gt;4)-beta-D-glucosyl]n+m + reduced acceptor + O2 = 4-dehydro-beta-D-glucosyl-[(1-&gt;4)-beta-D-glucosyl]n-1 + [(1-&gt;4)-beta-D-glucosyl]m + acceptor + H2O.. In terms of biological role, lytic polysaccharide monooxygenase (LPMO) that depolymerizes crystalline and amorphous polysaccharides via the oxidation of scissile alpha- or beta-(1-4)-glycosidic bonds, yielding C1 and C4 oxidation products. Catalysis by LPMOs requires the reduction of the active-site copper from Cu(II) to Cu(I) by a reducing agent and H(2)O(2) or O(2) as a cosubstrate. Active on cellulose and on xyloglucan for deconstruction of plant biomass. In Geotrichum candidum (Oospora lactis), this protein is AA9 family lytic polysaccharide monooxygenase B.